The primary structure comprises 276 residues: Undecaprenyl-diphosphatase (276 aa).

The next 6 membrane-spanning stretches (helical) occupy residues 43–63 (RAMA…VWEF), 85–105 (GNLL…ADLI), 109–129 (LFNP…MLWA), 183–203 (AATE…AVYS), 214–234 (GDLP…MIAV), and 249–269 (FAWY…FGWV).

The protein belongs to the UppP family.

The protein localises to the cell inner membrane. The catalysed reaction is di-trans,octa-cis-undecaprenyl diphosphate + H2O = di-trans,octa-cis-undecaprenyl phosphate + phosphate + H(+). Catalyzes the dephosphorylation of undecaprenyl diphosphate (UPP). Confers resistance to bacitracin. This is Undecaprenyl-diphosphatase from Pseudomonas putida (strain ATCC 700007 / DSM 6899 / JCM 31910 / BCRC 17059 / LMG 24140 / F1).